The following is a 662-amino-acid chain: UvrABC system protein B (662 aa).

In terms of domain architecture, Helicase ATP-binding spans 25–182 (KGIEKGEKFQ…KKLVEIQYER (158 aa)). 38–45 (GVTGSGKT) is a binding site for ATP. Residues 91–114 (YYDYYQPEAYVAQSDTYIEKDASI) carry the Beta-hairpin motif. The Helicase C-terminal domain maps to 429–595 (QIDDLYTSIQ…TIIKDIREVI (167 aa)). The region spanning 622–657 (DKLIEKYEEEMREAAQNLQFEKAAHLRDVIYKLKRD) is the UVR domain.

The protein belongs to the UvrB family. Forms a heterotetramer with UvrA during the search for lesions. Interacts with UvrC in an incision complex.

It localises to the cytoplasm. Its function is as follows. The UvrABC repair system catalyzes the recognition and processing of DNA lesions. A damage recognition complex composed of 2 UvrA and 2 UvrB subunits scans DNA for abnormalities. Upon binding of the UvrA(2)B(2) complex to a putative damaged site, the DNA wraps around one UvrB monomer. DNA wrap is dependent on ATP binding by UvrB and probably causes local melting of the DNA helix, facilitating insertion of UvrB beta-hairpin between the DNA strands. Then UvrB probes one DNA strand for the presence of a lesion. If a lesion is found the UvrA subunits dissociate and the UvrB-DNA preincision complex is formed. This complex is subsequently bound by UvrC and the second UvrB is released. If no lesion is found, the DNA wraps around the other UvrB subunit that will check the other stand for damage. The polypeptide is UvrABC system protein B (Clostridium botulinum (strain 657 / Type Ba4)).